The chain runs to 234 residues: MRLVQLSRHSIAFPSPEGALREPNGLLALGGDLSPTRLLMAYQRGIFPWFSPGDPILWWSPDPRAVLWPESLHISRSMKRFHKRSPYRVTMNYAFGQVIEGCASDREEGTWITRGVVEAYHRLHELGHAHSIEVWRKDELVGGMYGVAQGTLFCGESMFSRMENASKTALLVFCDEFIRHGGKLIDCQVLNDHTASLGACEIPRRDYLNYLNQMRLGRLPNNFWVPRCLFSPQE.

The protein belongs to the L/F-transferase family.

The protein resides in the cytoplasm. It carries out the reaction N-terminal L-lysyl-[protein] + L-leucyl-tRNA(Leu) = N-terminal L-leucyl-L-lysyl-[protein] + tRNA(Leu) + H(+). The enzyme catalyses N-terminal L-arginyl-[protein] + L-leucyl-tRNA(Leu) = N-terminal L-leucyl-L-arginyl-[protein] + tRNA(Leu) + H(+). The catalysed reaction is L-phenylalanyl-tRNA(Phe) + an N-terminal L-alpha-aminoacyl-[protein] = an N-terminal L-phenylalanyl-L-alpha-aminoacyl-[protein] + tRNA(Phe). In terms of biological role, functions in the N-end rule pathway of protein degradation where it conjugates Leu, Phe and, less efficiently, Met from aminoacyl-tRNAs to the N-termini of proteins containing an N-terminal arginine or lysine. This Escherichia fergusonii (strain ATCC 35469 / DSM 13698 / CCUG 18766 / IAM 14443 / JCM 21226 / LMG 7866 / NBRC 102419 / NCTC 12128 / CDC 0568-73) protein is Leucyl/phenylalanyl-tRNA--protein transferase.